Consider the following 98-residue polypeptide: Co-chaperonin GroES 1 (98 aa).

It belongs to the GroES chaperonin family. In terms of assembly, heptamer of 7 subunits arranged in a ring. Interacts with the chaperonin GroEL.

It is found in the cytoplasm. Functionally, together with the chaperonin GroEL, plays an essential role in assisting protein folding. The GroEL-GroES system forms a nano-cage that allows encapsulation of the non-native substrate proteins and provides a physical environment optimized to promote and accelerate protein folding. GroES binds to the apical surface of the GroEL ring, thereby capping the opening of the GroEL channel. The sequence is that of Co-chaperonin GroES 1 from Rhodopseudomonas palustris (strain ATCC BAA-98 / CGA009).